The following is a 355-amino-acid chain: Peptide chain release factor 1 (355 aa).

At Gln230 the chain carries N5-methylglutamine.

The protein belongs to the prokaryotic/mitochondrial release factor family. Post-translationally, methylated by PrmC. Methylation increases the termination efficiency of RF1.

The protein localises to the cytoplasm. Peptide chain release factor 1 directs the termination of translation in response to the peptide chain termination codons UAG and UAA. The protein is Peptide chain release factor 1 of Geobacter sulfurreducens (strain ATCC 51573 / DSM 12127 / PCA).